Here is a 79-residue protein sequence, read N- to C-terminus: Conotoxin ArMSGL-0121 (79 aa).

Residues 1 to 20 form the signal peptide; that stretch reads MSRLGIMVLTLLLLVFIVTS. A propeptide spanning residues 21-44 is cleaved from the precursor; sequence HQDAGEKQATQRNAINFRWRRSFT. Cystine bridges form between Cys52-Cys64, Cys56-Cys73, and Cys63-Cys77. Leu78 carries the post-translational modification Leucine amide.

This sequence belongs to the conotoxin O3 superfamily. Expressed by the venom duct.

Its subcellular location is the secreted. The protein is Conotoxin ArMSGL-0121 of Conus arenatus (Sand-dusted cone).